The primary structure comprises 286 residues: ATP synthase gamma chain (286 aa).

Belongs to the ATPase gamma chain family. In terms of assembly, F-type ATPases have 2 components, CF(1) - the catalytic core - and CF(0) - the membrane proton channel. CF(1) has five subunits: alpha(3), beta(3), gamma(1), delta(1), epsilon(1). CF(0) has three main subunits: a, b and c.

It is found in the cell inner membrane. In terms of biological role, produces ATP from ADP in the presence of a proton gradient across the membrane. The gamma chain is believed to be important in regulating ATPase activity and the flow of protons through the CF(0) complex. This Shewanella sp. (strain MR-4) protein is ATP synthase gamma chain.